Here is a 64-residue protein sequence, read N- to C-terminus: uncharacterized protein (64 aa).

This is an uncharacterized protein from Escherichia coli O157:H7.